We begin with the raw amino-acid sequence, 419 residues long: Zinc finger protein Pegasus (419 aa).

Residue Lys-5 forms a Glycyl lysine isopeptide (Lys-Gly) (interchain with G-Cter in SUMO2) linkage. Residues 36–55 (DKEAETLQGAGTDGDQNGLD) form a disordered region. 3 C2H2-type zinc fingers span residues 82–104 (LKCR…IRIH), 110–132 (HRCH…MRSH), and 138–161 (YKCE…RRKH). A Glycyl lysine isopeptide (Lys-Gly) (interchain with G-Cter in SUMO2) cross-link involves residue Lys-185. Polar residues predominate over residues 262 to 273 (LSSLPPENQNPA). 2 disordered regions span residues 262–284 (LSSL…PDEK) and 297–356 (VSAV…PTLP). Low complexity predominate over residues 297-311 (VSAVSASIPQSSSPT). Residues 332-349 (SEPSAHTSTPSIGNSQPS) are compositionally biased toward polar residues. C2H2-type zinc fingers lie at residues 364 to 386 (HHCQ…MGCH) and 392 to 416 (FQCN…RGQH).

This sequence belongs to the Ikaros C2H2-type zinc-finger protein family. In terms of assembly, self-associates. Interacts with other family members; IKZF1, IKZF2, IKZF3 and IKZF4.

The protein resides in the nucleus. Transcriptional repressor that binds the core 5'GNNTGTNG-3' DNA consensus sequence. Involved in megakaryocyte differentiation. This chain is Zinc finger protein Pegasus (Ikzf5), found in Mus musculus (Mouse).